Here is a 110-residue protein sequence, read N- to C-terminus: Phosphoribosyl-ATP pyrophosphatase (110 aa).

This sequence belongs to the PRA-PH family.

It localises to the cytoplasm. It catalyses the reaction 1-(5-phospho-beta-D-ribosyl)-ATP + H2O = 1-(5-phospho-beta-D-ribosyl)-5'-AMP + diphosphate + H(+). It functions in the pathway amino-acid biosynthesis; L-histidine biosynthesis; L-histidine from 5-phospho-alpha-D-ribose 1-diphosphate: step 2/9. The sequence is that of Phosphoribosyl-ATP pyrophosphatase from Clostridium novyi (strain NT).